The sequence spans 3461 residues: Abnormal spindle-like microcephaly-associated protein homolog (3461 aa).

A disordered region spans residues 1–30 (MATRRAGRSWEVSPTERRPSARPRNSAAEE). Residues serine 279, serine 282, serine 367, serine 392, serine 426, and serine 606 each carry the phosphoserine modification. The Calponin-homology (CH) 1 domain occupies 921–1057 (KTSKEILLAF…LLWKIAFAFQ (137 aa)). Positions 1058–1077 (VDISLNLDQLKEEIDFLKHT) form a coiled coil. Serine 1104 carries the post-translational modification Phosphoserine. The 152-residue stretch at 1111 to 1262 (SESIKLLMDW…YLSFLCARLL (152 aa)) folds into the Calponin-homology (CH) 2 domain. 42 IQ domains span residues 1267–1296 (ETRA…RDKA), 1348–1379 (QNKS…VILQ), 1488–1517 (LRSC…AILT), 1511–1540 (RREA…QKRA), 1538–1569 (KRAA…VFQS), 1583–1614 (LKKI…LIIQ), 1633–1662 (TRSA…SIIK), 1656–1685 (ILTS…ATVK), 1729–1758 (MRES…AAVS), 1752–1783 (QRKA…VVIQ), 1775–1804 (MYKA…QVKR), 1802–1831 (VKRA…AALK), 1825–1854 (QSIA…STIK), 1875–1904 (TKAA…AAVR), 1898–1929 (ELQA…LVIQ), 1948–1979 (LRNA…VIIQ), 1971–2002 (QHKC…RLIQ), 2021–2050 (TKAA…AAVA), 2044–2075 (YNKA…VLIQ), 2094–2125 (LKKT…TFIK), 2117–2148 (MHTA…VLIQ), 2167–2198 (ILKA…IRIQ), 2190–2219 (MQNA…VTQT), 2240–2271 (LRHS…TLIQ), 2313–2344 (LQKA…TVIQ), 2336–2367 (MHRA…VVIQ), 2386–2417 (QRHS…VLIQ), 2409–2440 (MHSS…VFVQ), 2459–2490 (VQKA…ALIQ), 2532–2563 (QRHS…IIIQ), 2666–2697 (RTQA…TLIQ), 2689–2720 (MHLA…VLIQ), 2739–2768 (LQKS…AKMA), 2837–2866 (QKHA…AAVT), 2860–2891 (QKRA…SVLQ), 2910–2939 (VRSS…STIK), 2933–2964 (IKDS…KIQA), 2955–2986 (KVKA…KVIQ), 3030–3059 (RHQA…AALT), 3080–3111 (LKKS…RLLH), 3182–3211 (QNRA…GITK), and 3205–3236 (INNG…IRLS).

The protein resides in the cytoplasm. Its subcellular location is the cytoskeleton. It localises to the spindle. It is found in the nucleus. In terms of biological role, probable role in mitotic spindle regulation and coordination of mitotic processes. May have a preferential role in regulating neurogenesis. The protein is Abnormal spindle-like microcephaly-associated protein homolog (ASPM) of Felis catus (Cat).